Consider the following 638-residue polypeptide: Probable potassium transport system protein Kup (638 aa).

The next 12 membrane-spanning stretches (helical) occupy residues 25–45 (LAIA…LYSL), 65–85 (VISL…LLFV), 114–134 (AGAL…DAVI), 152–172 (PHLS…LFWI), 184–204 (FGPI…YHIV), 226–246 (LLQA…AEAL), 262–282 (AYGL…ALLI), 291–311 (PFFL…STVA), 352–372 (IYVP…VIGF), 382–402 (YGIA…VVMV), 410–430 (LLVG…FGAN), and 434–454 (VAQG…LLMT).

It belongs to the HAK/KUP transporter (TC 2.A.72) family.

It is found in the cell inner membrane. The enzyme catalyses K(+)(in) + H(+)(in) = K(+)(out) + H(+)(out). Transport of potassium into the cell. Likely operates as a K(+):H(+) symporter. The polypeptide is Probable potassium transport system protein Kup (Burkholderia lata (strain ATCC 17760 / DSM 23089 / LMG 22485 / NCIMB 9086 / R18194 / 383)).